The primary structure comprises 150 residues: Peptide deformylase 1 (150 aa).

Cys-88 and His-130 together coordinate Fe cation. Glu-131 is a catalytic residue. His-134 lines the Fe cation pocket.

The protein belongs to the polypeptide deformylase family. Requires Fe(2+) as cofactor.

It catalyses the reaction N-terminal N-formyl-L-methionyl-[peptide] + H2O = N-terminal L-methionyl-[peptide] + formate. In terms of biological role, removes the formyl group from the N-terminal Met of newly synthesized proteins. Requires at least a dipeptide for an efficient rate of reaction. N-terminal L-methionine is a prerequisite for activity but the enzyme has broad specificity at other positions. The chain is Peptide deformylase 1 from Clostridium acetobutylicum (strain ATCC 824 / DSM 792 / JCM 1419 / IAM 19013 / LMG 5710 / NBRC 13948 / NRRL B-527 / VKM B-1787 / 2291 / W).